A 481-amino-acid chain; its full sequence is Ribosomal RNA small subunit methyltransferase F (481 aa).

Residues 125–131 (AAAPGSK), Glu-149, Asp-176, and Asp-194 contribute to the S-adenosyl-L-methionine site. Cys-247 functions as the Nucleophile in the catalytic mechanism.

This sequence belongs to the class I-like SAM-binding methyltransferase superfamily. RsmB/NOP family.

It localises to the cytoplasm. It catalyses the reaction cytidine(1407) in 16S rRNA + S-adenosyl-L-methionine = 5-methylcytidine(1407) in 16S rRNA + S-adenosyl-L-homocysteine + H(+). In terms of biological role, specifically methylates the cytosine at position 1407 (m5C1407) of 16S rRNA. The sequence is that of Ribosomal RNA small subunit methyltransferase F from Psychromonas ingrahamii (strain DSM 17664 / CCUG 51855 / 37).